The following is a 205-amino-acid chain: Putative 3-methyladenine DNA glycosylase (205 aa).

It belongs to the DNA glycosylase MPG family.

The protein is Putative 3-methyladenine DNA glycosylase of Bacillus cereus (strain Q1).